A 168-amino-acid chain; its full sequence is Peroxynitrite isomerase (168 aa).

The GXWXGXG signature appears at 25 to 31; it reads GTWRGAG. His-160 contributes to the heme b binding site.

It belongs to the nitrobindin family. In terms of assembly, homodimer. It depends on heme b as a cofactor.

The enzyme catalyses peroxynitrite = nitrate. Its pathway is nitrogen metabolism. Functionally, heme-binding protein able to scavenge peroxynitrite and to protect free L-tyrosine against peroxynitrite-mediated nitration, by acting as a peroxynitrite isomerase that converts peroxynitrite to nitrate. Therefore, this protein likely plays a role in peroxynitrite sensing and in the detoxification of reactive nitrogen and oxygen species (RNS and ROS, respectively). Is able to bind nitric oxide (NO) in vitro, but may act as a sensor of peroxynitrite levels in vivo. The protein is Peroxynitrite isomerase of Nocardia farcinica (strain IFM 10152).